Reading from the N-terminus, the 133-residue chain is ATP synthase epsilon chain (133 aa).

This sequence belongs to the ATPase epsilon chain family. In terms of assembly, F-type ATPases have 2 components, CF(1) - the catalytic core - and CF(0) - the membrane proton channel. CF(1) has five subunits: alpha(3), beta(3), gamma(1), delta(1), epsilon(1). CF(0) has three main subunits: a, b and c.

It localises to the cell membrane. Its function is as follows. Produces ATP from ADP in the presence of a proton gradient across the membrane. This is ATP synthase epsilon chain (atpC) from Alkalihalophilus pseudofirmus (strain ATCC BAA-2126 / JCM 17055 / OF4) (Bacillus pseudofirmus).